Reading from the N-terminus, the 248-residue chain is Triosephosphate isomerase (248 aa).

9–11 contacts substrate; it reads NWK. His-95 acts as the Electrophile in catalysis. Glu-166 (proton acceptor) is an active-site residue. Substrate is bound by residues Gly-172, Ser-210, and 231-232; that span reads GG.

The protein belongs to the triosephosphate isomerase family. Homodimer.

The protein resides in the cytoplasm. It catalyses the reaction D-glyceraldehyde 3-phosphate = dihydroxyacetone phosphate. The protein operates within carbohydrate biosynthesis; gluconeogenesis. It functions in the pathway carbohydrate degradation; glycolysis; D-glyceraldehyde 3-phosphate from glycerone phosphate: step 1/1. Involved in the gluconeogenesis. Catalyzes stereospecifically the conversion of dihydroxyacetone phosphate (DHAP) to D-glyceraldehyde-3-phosphate (G3P). The protein is Triosephosphate isomerase of Delftia acidovorans (strain DSM 14801 / SPH-1).